The following is an 89-amino-acid chain: MRHIHLQVFGRVQGVGFRYFTQRIAMNYNIVGTVQNVDDYVEIYAQGDDADIERFIQGVIEGASPASNVTSHQLEELELNQKLSDFRSI.

Positions 3–89 (HIHLQVFGRV…NQKLSDFRSI (87 aa)) constitute an Acylphosphatase-like domain. Residues R18 and N36 contribute to the active site.

This sequence belongs to the acylphosphatase family.

The enzyme catalyses an acyl phosphate + H2O = a carboxylate + phosphate + H(+). The polypeptide is Acylphosphatase (acyP) (Staphylococcus aureus (strain Mu3 / ATCC 700698)).